The primary structure comprises 389 residues: Aspartic protease pepA (389 aa).

A signal peptide spans 1–20 (MVLINQLGAVLAVCATLTVA). The propeptide at 21–67 (APTKGKARFNVPQVAIPKKMVHHPAVSYARALHKFGMKVPKTVQDAA) is activation peptide. The region spanning 82 to 386 (YVTQVTVGEG…DTQGPRIGFA (305 aa)) is the Peptidase A1 domain. D98 is a catalytic residue. N257 carries N-linked (GlcNAc...) asparagine glycosylation. D279 is an active-site residue. A disulfide bridge connects residues C315 and C348.

Belongs to the peptidase A1 family. As to quaternary structure, monomer.

It is found in the secreted. Secreted aspartic endopeptidase that allows assimilation of proteinaceous substrates. The scissile peptide bond is attacked by a nucleophilic water molecule activated by two aspartic residues in the active site. Shows a broad primary substrate specificity. Favors hydrophobic residues at the P1 and P1' positions. This chain is Aspartic protease pepA, found in Arthroderma otae (strain ATCC MYA-4605 / CBS 113480) (Microsporum canis).